We begin with the raw amino-acid sequence, 317 residues long: 4-hydroxy-3-methylbut-2-enyl diphosphate reductase (317 aa).

Cys-12 serves as a coordination point for [4Fe-4S] cluster. 2 residues coordinate (2E)-4-hydroxy-3-methylbut-2-enyl diphosphate: His-41 and His-74. Residues His-41 and His-74 each coordinate dimethylallyl diphosphate. Residues His-41 and His-74 each contribute to the isopentenyl diphosphate site. Cys-97 is a [4Fe-4S] cluster binding site. His-125 is a (2E)-4-hydroxy-3-methylbut-2-enyl diphosphate binding site. His-125 is a binding site for dimethylallyl diphosphate. His-125 provides a ligand contact to isopentenyl diphosphate. The active-site Proton donor is the Glu-127. Thr-168 contacts (2E)-4-hydroxy-3-methylbut-2-enyl diphosphate. A [4Fe-4S] cluster-binding site is contributed by Cys-198. The (2E)-4-hydroxy-3-methylbut-2-enyl diphosphate site is built by Ser-226, Ser-227, Asn-228, and Ser-270. Residues Ser-226, Ser-227, Asn-228, and Ser-270 each coordinate dimethylallyl diphosphate. Isopentenyl diphosphate-binding residues include Ser-226, Ser-227, Asn-228, and Ser-270.

It belongs to the IspH family. In terms of assembly, homodimer. [4Fe-4S] cluster is required as a cofactor.

The enzyme catalyses isopentenyl diphosphate + 2 oxidized [2Fe-2S]-[ferredoxin] + H2O = (2E)-4-hydroxy-3-methylbut-2-enyl diphosphate + 2 reduced [2Fe-2S]-[ferredoxin] + 2 H(+). It catalyses the reaction dimethylallyl diphosphate + 2 oxidized [2Fe-2S]-[ferredoxin] + H2O = (2E)-4-hydroxy-3-methylbut-2-enyl diphosphate + 2 reduced [2Fe-2S]-[ferredoxin] + 2 H(+). It functions in the pathway isoprenoid biosynthesis; dimethylallyl diphosphate biosynthesis; dimethylallyl diphosphate from (2E)-4-hydroxy-3-methylbutenyl diphosphate: step 1/1. It participates in isoprenoid biosynthesis; isopentenyl diphosphate biosynthesis via DXP pathway; isopentenyl diphosphate from 1-deoxy-D-xylulose 5-phosphate: step 6/6. In terms of biological role, catalyzes the conversion of 1-hydroxy-2-methyl-2-(E)-butenyl 4-diphosphate (HMBPP) into a mixture of isopentenyl diphosphate (IPP) and dimethylallyl diphosphate (DMAPP). Acts in the terminal step of the DOXP/MEP pathway for isoprenoid precursor biosynthesis. This Edwardsiella ictaluri (strain 93-146) protein is 4-hydroxy-3-methylbut-2-enyl diphosphate reductase.